The primary structure comprises 243 residues: NH(3)-dependent NAD(+) synthetase (243 aa).

Residue 31–38 (GVSGGIDS) participates in ATP binding. D37 serves as a coordination point for Mg(2+). R110 lines the deamido-NAD(+) pocket. Position 130 (T130) interacts with ATP. Residue E135 coordinates Mg(2+). The deamido-NAD(+) site is built by K143 and D150. Residues K159 and S181 each contribute to the ATP site. Residue 227-228 (HK) participates in deamido-NAD(+) binding.

The protein belongs to the NAD synthetase family. Homodimer.

It catalyses the reaction deamido-NAD(+) + NH4(+) + ATP = AMP + diphosphate + NAD(+) + H(+). The protein operates within cofactor biosynthesis; NAD(+) biosynthesis; NAD(+) from deamido-NAD(+) (ammonia route): step 1/1. In terms of biological role, catalyzes the ATP-dependent amidation of deamido-NAD to form NAD. Uses ammonia as a nitrogen source. The protein is NH(3)-dependent NAD(+) synthetase of Malacoplasma penetrans (strain HF-2) (Mycoplasma penetrans).